The primary structure comprises 480 residues: Alpha,alpha-trehalose-phosphate synthase [UDP-forming] 2 (480 aa).

2 residues coordinate D-glucose 6-phosphate: tyrosine 97 and aspartate 151. Residues arginine 288 and lysine 293 each coordinate UDP. Residues arginine 288 and lysine 293 each contribute to the UDP-alpha-D-glucose site. Arginine 326 serves as a coordination point for D-glucose 6-phosphate. 387-395 (DGMNLVSFE) serves as a coordination point for UDP-alpha-D-glucose. A UDP-binding site is contributed by 391-395 (LVSFE).

Belongs to the glycosyltransferase 20 family.

The enzyme catalyses D-glucose 6-phosphate + UDP-alpha-D-glucose = alpha,alpha-trehalose 6-phosphate + UDP + H(+). It participates in carbohydrate biosynthesis. Synthase catalytic subunit of the trehalose synthase complex that catalyzes the production of trehalose from glucose-6-phosphate and UDP-alpha-D-glucose in a two step process. The chain is Alpha,alpha-trehalose-phosphate synthase [UDP-forming] 2 from Aspergillus niger.